Here is a 1080-residue protein sequence, read N- to C-terminus: Myocardin-related transcription factor B (1080 aa).

The RPEL 1 repeat unit spans residues 40-65; sequence EVLQLRLQQRRTREQLVDQGIMPPLK. Ser66 bears the Phosphoserine mark. RPEL repeat units lie at residues 84 to 109 and 128 to 153; these read NFLK…EETF and DDLN…PVDS. 4 disordered regions span residues 170–222, 234–311, 352–384, and 477–501; these read THGE…AQFT, TPLT…EPQM, PIKT…SSLD, and PHVE…LSTD. Polar residues-rich tracts occupy residues 188–200 and 240–259; these read QPAS…SAAS and QPPT…SSAK. Over residues 272–287 the composition is skewed to basic and acidic residues; it reads NPNDKHRSKKCKDPKP. Residues 358 to 370 are compositionally biased toward low complexity; sequence NSSSGSNSGSSSS. The SAP domain maps to 383–417; that stretch reads LDDLKVSELKTELKLRGLPVSGTKPDLIERLKPYQ. Residues Ser531, Ser535, and Ser537 each carry the phosphoserine modification. The stretch at 539-594 forms a coiled coil; sequence SSSTLSTLELDAAEKDRKLQEKEKQIEELKRKLEQEQKLVEVLKMQLEVEKRGQQR. Residues 557 to 585 are required for interaction with itself and with MRTFA; the sequence is LQEKEKQIEELKRKLEQEQKLVEVLKMQL. 2 disordered regions span residues 588–646 and 794–846; these read EKRG…SVGQ and LQYQ…PQQF. Positions 595–606 are enriched in pro residues; the sequence is PPDPQPSDPPHP. Residue Lys622 forms a Glycyl lysine isopeptide (Lys-Gly) (interchain with G-Cter in SUMO1) linkage. Residues 794–821 show a composition bias toward polar residues; the sequence is LQYQRQPGPTNQQPFVSKTSNPALQSRT. Phosphoserine is present on Ser913. The disordered stretch occupies residues 969 to 988; sequence GTLPSATDTGPLQNSSEDRE. A compositionally biased stretch (polar residues) spans 972-983; sequence PSATDTGPLQNS.

In terms of assembly, interacts with MRTFA and SRF. O-glycosylated. Widely expressed. High expression in heart, brain and testis. Lower expression in lung, liver and kidney.

It is found in the nucleus. Its function is as follows. Acts as a transcriptional coactivator of serum response factor (SRF). Required for skeletal myogenic differentiation. This is Myocardin-related transcription factor B (Mrtfb) from Mus musculus (Mouse).